The chain runs to 902 residues: MSEDQGQQGQRLSTARGSTCLKQTMTEPALSAGLGTDGPVGAAKDNIRVRIQSRRRSRLLSRLGRKIPTQGRFTVGWYFWFLLIYTSLAVEPVKSHETHSHSSDAEGTSHQDVSDRRNHPCHTPRPSSHSQADSFESVARGQQKEQSRTMREDAVSPVLLDVKRSQSTPVELAKLVSLKLSTSFGSRTVIRRSQPGVRQSVRAAQLQRMMLDRGNPKRERSSGSSTPSSKSSPVDSVSTAPTSVSPGSLAPSGSTNNDPASGFKHIDSQADLPERPLSPVRESPMVSPTIQTTEATAIVKVFLETHFHTLLSGLDARTQRRLELDQYIETFPLSPEEVVRVRKHWVTQERDYLRQYRVLKSRPQDKTSRAGTASLAGFEPLKILGRGSFGVVRLVREKRTDEQTQSGRVPLAPKTNHRQAMTGVKKDVFAMKVIRKSVMIRNCQEAHLRAERDFLVASAKSRWVVPLIASFQDQKHLYLVMDYMVGGDFLGLLIRHNILRESIARWYVAEMILCIEEAHRLRCIHRDVKPDNFLISESGHLKISDFGLAFDGHWAHDQWYFTYQRHSLLKRLGIQIDGDAEDQKLSHDANIQSLGTTREDGSMEDDWIHPPTNGLLHWRDKNQTRTMARSVVGTSQYMAPEVIRGHPYDGRCDWWSLGVILYECLYGFTPFASEDRHQTKLKIHRHLQTLYFPVHRPTDKLVSADAIDVINSLLQEKEFRLSSPKYKQNDAISSKPAKCSFYKPDSSNPSYQGHYVYPDDATDIKSHRFFRGINWEQIHRTSPPFIPMVRGWEDTRYFDDGEHPSDREDDSSDSELDGVQDKWHPLGGKGGLHKPDKPLKADVKPSSYPKGNDGAKDTAIASLKHKKRLKEAKRARDKILRDKRLRRTVLEMLRCLVVVAAT.

Disordered regions lie at residues 1-22 (MSED…TCLK), 97-154 (ETHS…REDA), and 207-288 (QRMM…MVSP). The segment covering 97–118 (ETHSHSSDAEGTSHQDVSDRRN) has biased composition (basic and acidic residues). Positions 125-134 (RPSSHSQADS) are enriched in polar residues. Basic and acidic residues-rich tracts occupy residues 142 to 154 (QQKE…REDA) and 210 to 221 (MLDRGNPKRERS). Low complexity predominate over residues 222–239 (SGSSTPSSKSSPVDSVST). Residues 240 to 259 (APTSVSPGSLAPSGSTNNDP) are compositionally biased toward polar residues. Residues 264–274 (KHIDSQADLPE) show a composition bias toward basic and acidic residues. The region spanning 378–732 (FEPLKILGRG…SPKYKQNDAI (355 aa)) is the Protein kinase domain. ATP contacts are provided by residues 384 to 392 (LGRGSFGVV) and Lys432. Residue Asp527 is the Proton acceptor of the active site. Residues 771 to 831 (RGINWEQIHR…KWHPLGGKGG (61 aa)) form the AGC-kinase C-terminal domain. Positions 797 to 806 (YFDDGEHPSD) are enriched in basic and acidic residues. The interval 797 to 875 (YFDDGEHPSD…KKRLKEAKRA (79 aa)) is disordered. The segment covering 807 to 818 (REDDSSDSELDG) has biased composition (acidic residues). The segment covering 833–843 (HKPDKPLKADV) has biased composition (basic and acidic residues).

This sequence belongs to the protein kinase superfamily. STE Ser/Thr protein kinase family. COT1 subfamily.

It catalyses the reaction L-seryl-[protein] + ATP = O-phospho-L-seryl-[protein] + ADP + H(+). The enzyme catalyses L-threonyl-[protein] + ATP = O-phospho-L-threonyl-[protein] + ADP + H(+). In terms of biological role, protein kinase that seems to play a role in the regulation of cell morphogenesis and proliferation. This chain is Serine/threonine-protein kinase cbk1 (cbk1), found in Emericella nidulans (strain FGSC A4 / ATCC 38163 / CBS 112.46 / NRRL 194 / M139) (Aspergillus nidulans).